Consider the following 350-residue polypeptide: Purine-binding protein BAB2_0673 (350 aa).

The first 17 residues, 1–17, serve as a signal peptide directing secretion; the sequence is MVIATVAGFMLGGAAHA. Positions 36, 185, and 211 each coordinate adenine.

The protein belongs to the BMP lipoprotein family.

Its function is as follows. Binds adenine and probably also other purines, such as guanine. May play a role in adenine and guanine uptake. May be part of an ABC-type uptake system for adenine and similar ligands. This is Purine-binding protein BAB2_0673 from Brucella abortus (strain 2308).